An 855-amino-acid chain; its full sequence is DNA mismatch repair protein MutS (855 aa).

615 to 622 (GPNMGGKS) contacts ATP.

It belongs to the DNA mismatch repair MutS family.

Functionally, this protein is involved in the repair of mismatches in DNA. It is possible that it carries out the mismatch recognition step. This protein has a weak ATPase activity. The chain is DNA mismatch repair protein MutS from Aliivibrio salmonicida (strain LFI1238) (Vibrio salmonicida (strain LFI1238)).